The chain runs to 185 residues: Transcription termination/antitermination protein NusG (185 aa).

The KOW domain maps to 133 to 161 (PGEEVRVTEGPFADFNGTVEEVDYEKGRL).

Belongs to the NusG family.

Participates in transcription elongation, termination and antitermination. In Haemophilus influenzae (strain ATCC 51907 / DSM 11121 / KW20 / Rd), this protein is Transcription termination/antitermination protein NusG.